We begin with the raw amino-acid sequence, 435 residues long: MNEHDSSIIENILKKTNLYIITKKPEISDILILNTCSIREKAQEKLFHQLGRWKKLKQKNSKILIAVGGCVAVQEGKKIYKRAKFIDIIFGPQTLHKLPKLLIESNKKKSLIINIKKKSLKKFNYTINKNTNIKKKFSSFVTIMEGCNKYCSFCIVPYTRGKEVSRNNKKIISEIIELSKKGVREITLLGQNVNAYKFSDTFNKKNYSFSDLLYSISEIPRIDRIRFITSHPVEFNNNIIEAYKKIPKLTNFLHLPVQSGSNKILKLMKRGYTIEKYENIVNKIKKIRPKINISSDFIIGFPGETKEDFQKTIYFISKINFDTSYSFIYSKRPRTRASKLEDNVTMEEKKKRLYKVQQKINQQAFQWKRRSTEQIVLVEGISKNNIQELYGRTENNRTVFFEGNPKFIGNFIKLKIISIKYNTFLKGKIISNNYF.

The region spanning 1 to 107 is the MTTase N-terminal domain; sequence MNEHDSSIIE…LPKLLIESNK (107 aa). Positions 133–366 constitute a Radical SAM core domain; it reads IKKKFSSFVT…QQKINQQAFQ (234 aa). The [4Fe-4S] cluster site is built by cysteine 147, cysteine 151, and cysteine 154. Positions 367–431 constitute a TRAM domain; it reads WKRRSTEQIV…NTFLKGKIIS (65 aa).

It belongs to the methylthiotransferase family. MiaB subfamily. Monomer. [4Fe-4S] cluster is required as a cofactor.

Its subcellular location is the cytoplasm. It carries out the reaction N(6)-dimethylallyladenosine(37) in tRNA + (sulfur carrier)-SH + AH2 + 2 S-adenosyl-L-methionine = 2-methylsulfanyl-N(6)-dimethylallyladenosine(37) in tRNA + (sulfur carrier)-H + 5'-deoxyadenosine + L-methionine + A + S-adenosyl-L-homocysteine + 2 H(+). Catalyzes the methylthiolation of N6-(dimethylallyl)adenosine (i(6)A), leading to the formation of 2-methylthio-N6-(dimethylallyl)adenosine (ms(2)i(6)A) at position 37 in tRNAs that read codons beginning with uridine. The chain is tRNA-2-methylthio-N(6)-dimethylallyladenosine synthase (miaB) from Buchnera aphidicola subsp. Cinara cedri (strain Cc).